The primary structure comprises 624 residues: Polycomb group protein EMF2A (624 aa).

The C2H2-type zinc-finger motif lies at 338–359; the sequence is CPFCLVRCGNFKGLECHMTSSH. Residues 420 to 445 form a disordered region; that stretch reads DAHIMESGSPEETQAESEDDVQEENE. The segment covering 432–445 has biased composition (acidic residues); that stretch reads TQAESEDDVQEENE. Residues 474-609 are VEFS-box; it reads LSANRADPRN…SARTMDTCNR (136 aa).

It belongs to the VEFS (VRN2-EMF2-FIS2-SU(Z)12) family. Component of the polycomb repressive complex 2 (PRC2), which methylates 'Lys-27' residues of histone H3 (H3K27me3), leading to transcriptional repression of the affected target gene. As to expression, widely expressed. Highly expressed in shoot apical meristem and inflorescence meristem. Expressed in roots, leaves and immature seeds.

In terms of biological role, polycomb group (PcG) protein. PcG proteins act by forming multiprotein complexes, which are required to maintain the transcriptionally repressive state of homeotic genes throughout development. PcG proteins are not required to initiate repression, but to maintain it during later stages of development. They act via the methylation of histones, rendering chromatin heritably changed in its expressibility. This chain is Polycomb group protein EMF2A, found in Oryza sativa subsp. japonica (Rice).